We begin with the raw amino-acid sequence, 61 residues long: Large ribosomal subunit protein uL30 (61 aa).

The protein belongs to the universal ribosomal protein uL30 family. Part of the 50S ribosomal subunit.

This Chlorobium phaeobacteroides (strain DSM 266 / SMG 266 / 2430) protein is Large ribosomal subunit protein uL30.